The sequence spans 225 residues: 2-C-methyl-D-erythritol 4-phosphate cytidylyltransferase (225 aa).

Belongs to the IspD/TarI cytidylyltransferase family. IspD subfamily.

The catalysed reaction is 2-C-methyl-D-erythritol 4-phosphate + CTP + H(+) = 4-CDP-2-C-methyl-D-erythritol + diphosphate. It participates in isoprenoid biosynthesis; isopentenyl diphosphate biosynthesis via DXP pathway; isopentenyl diphosphate from 1-deoxy-D-xylulose 5-phosphate: step 2/6. Its function is as follows. Catalyzes the formation of 4-diphosphocytidyl-2-C-methyl-D-erythritol from CTP and 2-C-methyl-D-erythritol 4-phosphate (MEP). The polypeptide is 2-C-methyl-D-erythritol 4-phosphate cytidylyltransferase (Cereibacter sphaeroides (strain ATCC 17029 / ATH 2.4.9) (Rhodobacter sphaeroides)).